The chain runs to 588 residues: Schlafen family member 12-like (588 aa).

Residues 566-586 traverse the membrane as a helical segment; sequence IFLFVCLFRFCLFVCWFVCFF.

The protein belongs to the Schlafen family.

The protein localises to the membrane. In Homo sapiens (Human), this protein is Schlafen family member 12-like (SLFN12L).